Consider the following 145-residue polypeptide: D-aminoacyl-tRNA deacylase (145 aa).

The Gly-cisPro motif, important for rejection of L-amino acids motif lies at 137–138 (GP).

The protein belongs to the DTD family. Homodimer.

It is found in the cytoplasm. The catalysed reaction is glycyl-tRNA(Ala) + H2O = tRNA(Ala) + glycine + H(+). It carries out the reaction a D-aminoacyl-tRNA + H2O = a tRNA + a D-alpha-amino acid + H(+). Functionally, an aminoacyl-tRNA editing enzyme that deacylates mischarged D-aminoacyl-tRNAs. Also deacylates mischarged glycyl-tRNA(Ala), protecting cells against glycine mischarging by AlaRS. Acts via tRNA-based rather than protein-based catalysis; rejects L-amino acids rather than detecting D-amino acids in the active site. By recycling D-aminoacyl-tRNA to D-amino acids and free tRNA molecules, this enzyme counteracts the toxicity associated with the formation of D-aminoacyl-tRNA entities in vivo and helps enforce protein L-homochirality. This Deinococcus radiodurans (strain ATCC 13939 / DSM 20539 / JCM 16871 / CCUG 27074 / LMG 4051 / NBRC 15346 / NCIMB 9279 / VKM B-1422 / R1) protein is D-aminoacyl-tRNA deacylase.